The sequence spans 456 residues: Trigger factor (456 aa).

Residues 192–277 enclose the PPIase FKBP-type domain; the sequence is GDTVVIDFVG…IHEVKTKEVP (86 aa).

This sequence belongs to the FKBP-type PPIase family. Tig subfamily.

It localises to the cytoplasm. The catalysed reaction is [protein]-peptidylproline (omega=180) = [protein]-peptidylproline (omega=0). In terms of biological role, involved in protein export. Acts as a chaperone by maintaining the newly synthesized protein in an open conformation. Functions as a peptidyl-prolyl cis-trans isomerase. The protein is Trigger factor of Streptococcus pyogenes serotype M12 (strain MGAS9429).